A 273-amino-acid polypeptide reads, in one-letter code: 4-hydroxy-tetrahydrodipicolinate reductase (273 aa).

NAD(+) is bound by residues 12-17 (GAGGRM) and Glu-38. An NADP(+)-binding site is contributed by Arg-39. Residues 102–104 (GTT) and 126–129 (AANF) each bind NAD(+). The active-site Proton donor/acceptor is the His-159. His-160 contributes to the (S)-2,3,4,5-tetrahydrodipicolinate binding site. Lys-163 (proton donor) is an active-site residue. (S)-2,3,4,5-tetrahydrodipicolinate is bound at residue 169-170 (GT).

It belongs to the DapB family. Homotetramer.

The protein resides in the cytoplasm. The catalysed reaction is (S)-2,3,4,5-tetrahydrodipicolinate + NAD(+) + H2O = (2S,4S)-4-hydroxy-2,3,4,5-tetrahydrodipicolinate + NADH + H(+). It carries out the reaction (S)-2,3,4,5-tetrahydrodipicolinate + NADP(+) + H2O = (2S,4S)-4-hydroxy-2,3,4,5-tetrahydrodipicolinate + NADPH + H(+). Its pathway is amino-acid biosynthesis; L-lysine biosynthesis via DAP pathway; (S)-tetrahydrodipicolinate from L-aspartate: step 4/4. In terms of biological role, catalyzes the conversion of 4-hydroxy-tetrahydrodipicolinate (HTPA) to tetrahydrodipicolinate. In Salmonella arizonae (strain ATCC BAA-731 / CDC346-86 / RSK2980), this protein is 4-hydroxy-tetrahydrodipicolinate reductase.